We begin with the raw amino-acid sequence, 233 residues long: 3-dehydroquinate dehydratase (233 aa).

3-dehydroquinate is bound by residues 34 to 36 and Arg-64; that span reads ELR. His-118 serves as the catalytic Proton donor/acceptor. The active-site Schiff-base intermediate with substrate is Lys-145. The 3-dehydroquinate site is built by Arg-185, Ser-205, and Gln-209.

It belongs to the type-I 3-dehydroquinase family. Homodimer.

It carries out the reaction 3-dehydroquinate = 3-dehydroshikimate + H2O. It functions in the pathway metabolic intermediate biosynthesis; chorismate biosynthesis; chorismate from D-erythrose 4-phosphate and phosphoenolpyruvate: step 3/7. Functionally, involved in the third step of the chorismate pathway, which leads to the biosynthesis of aromatic amino acids. Catalyzes the cis-dehydration of 3-dehydroquinate (DHQ) and introduces the first double bond of the aromatic ring to yield 3-dehydroshikimate. The protein is 3-dehydroquinate dehydratase of Coxiella burnetii (strain CbuG_Q212) (Coxiella burnetii (strain Q212)).